The following is a 146-amino-acid chain: Probable U6 snRNA-associated Sm-like protein LSm4 (146 aa).

Positions 2-75 (LPLSLLKTAQ…IKYLRVPDEV (74 aa)) constitute a Sm domain. Residues 80-91 (QEEAKSRTDRKP) show a composition bias toward basic and acidic residues. Residues 80–146 (QEEAKSRTDR…GGRGGGRGRG (67 aa)) form a disordered region. The span at 137 to 146 (GGRGGGRGRG) shows a compositional bias: gly residues.

Belongs to the snRNP Sm proteins family. LSm subunits form a heteromer with a doughnut shape.

Its subcellular location is the nucleus. Functionally, binds specifically to the 3'-terminal U-tract of U6 snRNA. The chain is Probable U6 snRNA-associated Sm-like protein LSm4 from Nicotiana tabacum (Common tobacco).